The sequence spans 275 residues: Phosphate import ATP-binding protein PstB (275 aa).

One can recognise an ABC transporter domain in the interval 28-270 (IDCRDIRVFY…PREKRTEDYI (243 aa)). An ATP-binding site is contributed by 60 to 67 (GPSGCGKS).

Belongs to the ABC transporter superfamily. Phosphate importer (TC 3.A.1.7) family. The complex is composed of two ATP-binding proteins (PstB), two transmembrane proteins (PstC and PstA) and a solute-binding protein (PstS).

It is found in the cell inner membrane. The catalysed reaction is phosphate(out) + ATP + H2O = ADP + 2 phosphate(in) + H(+). Functionally, part of the ABC transporter complex PstSACB involved in phosphate import. Responsible for energy coupling to the transport system. This chain is Phosphate import ATP-binding protein PstB, found in Hyphomonas neptunium (strain ATCC 15444).